The chain runs to 518 residues: Cytochrome P450 CYP72A219 (518 aa).

A helical transmembrane segment spans residues 2 to 22 (ELVLKLISSFCAIVVVILLGW). A heme-binding site is contributed by cysteine 465.

It belongs to the cytochrome P450 family. Heme is required as a cofactor.

It is found in the membrane. Probable heme-thiolate monooxygenase. This Panax ginseng (Korean ginseng) protein is Cytochrome P450 CYP72A219.